A 434-amino-acid chain; its full sequence is Beta-enolase (434 aa).

Alanine 2 carries the N-acetylalanine modification. Threonine 72 is modified (phosphothreonine). 2 positions are modified to phosphoserine: serine 83 and serine 157. Positions 158 and 167 each coordinate substrate. Serine 176 carries the post-translational modification Phosphoserine. Threonine 205 bears the Phosphothreonine mark. Residue glutamate 210 is the Proton donor of the active site. Phosphothreonine is present on threonine 229. Position 236 is a phosphotyrosine (tyrosine 236). Residue aspartate 245 participates in Mg(2+) binding. The residue at position 263 (serine 263) is a Phosphoserine. Positions 293 and 318 each coordinate substrate. Residues glutamate 293 and aspartate 318 each coordinate Mg(2+). Lysine 343 functions as the Proton acceptor in the catalytic mechanism. Substrate contacts are provided by residues 370–373 and lysine 394; that span reads SHRS.

It belongs to the enolase family. As to quaternary structure, mammalian enolase is composed of 3 isozyme subunits, alpha, beta and gamma, which can form homodimers or heterodimers which are cell-type and development-specific. In vitro, interacts with several glycolytic enzymes including PKM, PGM, CKM and ALDO. Also binds PLG and troponin, in vitro. Interacts with PNKD. Mg(2+) is required as a cofactor. As to expression, brain (at protein level). The alpha/alpha homodimer is expressed in embryo and in most adult tissues. The alpha/beta heterodimer and the beta/beta homodimer are found in striated muscle, and the alpha/gamma heterodimer and the gamma/gamma homodimer in neurons. In striated muscle, the fiber-type order of ENO3 expression is IIB &gt; IIX &gt; IIA &gt; I.

The protein resides in the cytoplasm. It catalyses the reaction (2R)-2-phosphoglycerate = phosphoenolpyruvate + H2O. The protein operates within carbohydrate degradation; glycolysis; pyruvate from D-glyceraldehyde 3-phosphate: step 4/5. Functionally, glycolytic enzyme that catalyzes the conversion of 2-phosphoglycerate to phosphoenolpyruvate. Appears to have a function in striated muscle development and regeneration. This is Beta-enolase (Eno3) from Mus musculus (Mouse).